A 458-amino-acid polypeptide reads, in one-letter code: Exodeoxyribonuclease 7 large subunit (458 aa).

It belongs to the XseA family. As to quaternary structure, heterooligomer composed of large and small subunits.

Its subcellular location is the cytoplasm. The catalysed reaction is Exonucleolytic cleavage in either 5'- to 3'- or 3'- to 5'-direction to yield nucleoside 5'-phosphates.. In terms of biological role, bidirectionally degrades single-stranded DNA into large acid-insoluble oligonucleotides, which are then degraded further into small acid-soluble oligonucleotides. This is Exodeoxyribonuclease 7 large subunit from Halalkalibacterium halodurans (strain ATCC BAA-125 / DSM 18197 / FERM 7344 / JCM 9153 / C-125) (Bacillus halodurans).